Here is a 234-residue protein sequence, read N- to C-terminus: Large ribosomal subunit protein uL1 (234 aa).

It belongs to the universal ribosomal protein uL1 family. As to quaternary structure, part of the 50S ribosomal subunit.

Its function is as follows. Binds directly to 23S rRNA. The L1 stalk is quite mobile in the ribosome, and is involved in E site tRNA release. Protein L1 is also a translational repressor protein, it controls the translation of the L11 operon by binding to its mRNA. The protein is Large ribosomal subunit protein uL1 of Yersinia pseudotuberculosis serotype O:1b (strain IP 31758).